The sequence spans 189 residues: MLGSTAVMLLLLLPWTAQTRAVSGSSNPSWTQCQQLSQKLCTLAWSAHPSVGHVEPPREEADEETTDYVPHILCGDGCDPQGLKDNSQFCLQRIYQGLVFYQNLLGSDIFTGEPPLFPDGPVSQLHASLLGLSQLLQPEVHQWEPQIPSLSPNQPWQRLLLRIKILRSFQAFVAVAARVFGHGAATLTP.

A signal peptide spans 1–19 (MLGSTAVMLLLLLPWTAQT).

The protein belongs to the IL-6 superfamily. Heterodimer with IL12B; disulfide-linked. The heterodimer is known as interleukin IL-23. Interacts with IL23R; this interaction enables recruitment of IL12RB1.

Its subcellular location is the secreted. Functionally, associates with IL12B to form the pro-inflammatory cytokine IL-23 that plays different roles in innate and adaptive immunity. Released by antigen-presenting cells such as dendritic cells or macrophages, binds to a heterodimeric receptor complex composed of IL12RB1 and IL23R to activate JAK2 and TYK2 which then phosphorylate the receptor to form a docking site leading to the phosphorylation of STAT3 and STAT4. This process leads to activation of several pathways including p38 MAPK or NF-kappa-B and promotes the production of pro-inflammatory cytokines such as interleukin-17A/IL17A. In turn, participates in the early and effective intracellular bacterial clearance. Promotes the expansion and survival of T-helper 17 cells, a CD4-positive helper T-cell subset that produces IL-17, as well as other IL-17-producing cells. This Cavia porcellus (Guinea pig) protein is Interleukin-23 subunit alpha (IL23A).